Reading from the N-terminus, the 541-residue chain is 2-hydroxyacylsphingosine 1-beta-galactosyltransferase (541 aa).

The N-terminal stretch at 1 to 20 (MKSYTPYFMLLWSAVGIARA) is a signal peptide. Residues Asn78, Asn333, and Asn442 are each glycosylated (N-linked (GlcNAc...) asparagine). Residues 472-492 (YFLLDIAFVLLLGAVALYFIV) traverse the membrane as a helical segment.

This sequence belongs to the UDP-glycosyltransferase family. As to expression, brain, restricted to the oligodendrocyte-containing cell layers of cerebrum and cerebellum.

It is found in the membrane. The protein resides in the endoplasmic reticulum. The enzyme catalyses an N-acylsphing-4-enine + UDP-alpha-D-galactose = a beta-D-galactosyl-(1&lt;-&gt;1')-N-acylsphing-4-enine + UDP + H(+). It catalyses the reaction N-(2-hydroxy-hexanoyl)-sphing-4-enine + UDP-alpha-D-galactose = N-(2-hydroxy-hexanoyl)-beta-D-galactosyl-sphing-4-enine + UDP + H(+). The catalysed reaction is N-(2-hydroxy-hexanoyl)-sphinganine + UDP-alpha-D-galactose = N-(2-hydroxyhexanoyl)-beta-D-galactosylsphinganine + UDP + H(+). It carries out the reaction an N-acyl-sphingoid base + UDP-alpha-D-galactose = a D-galactosylceramide + UDP + H(+). It functions in the pathway sphingolipid metabolism; galactosylceramide biosynthesis. Catalyzes the transfer of galactose to ceramide, a key enzymatic step in the biosynthesis of galactocerebrosides, which are abundant sphingolipids of the myelin membrane of the central nervous system and peripheral nervous system. Galactosylates both hydroxy- and non-hydroxy fatty acid-containing ceramides and diglycerides. The sequence is that of 2-hydroxyacylsphingosine 1-beta-galactosyltransferase from Rattus norvegicus (Rat).